The following is a 140-amino-acid chain: Large ribosomal subunit protein uL11 (140 aa).

Belongs to the universal ribosomal protein uL11 family. In terms of assembly, part of the ribosomal stalk of the 50S ribosomal subunit. Interacts with L10 and the large rRNA to form the base of the stalk. L10 forms an elongated spine to which L12 dimers bind in a sequential fashion forming a multimeric L10(L12)X complex. One or more lysine residues are methylated.

Functionally, forms part of the ribosomal stalk which helps the ribosome interact with GTP-bound translation factors. This is Large ribosomal subunit protein uL11 from Syntrophobacter fumaroxidans (strain DSM 10017 / MPOB).